Consider the following 352-residue polypeptide: tRNA N6-adenosine threonylcarbamoyltransferase (352 aa).

Fe cation contacts are provided by histidine 115 and histidine 119. Substrate contacts are provided by residues 138–142 (LVSGG), aspartate 171, glycine 184, and asparagine 277. Aspartate 305 serves as a coordination point for Fe cation.

The protein belongs to the KAE1 / TsaD family. The cofactor is Fe(2+).

It localises to the cytoplasm. The catalysed reaction is L-threonylcarbamoyladenylate + adenosine(37) in tRNA = N(6)-L-threonylcarbamoyladenosine(37) in tRNA + AMP + H(+). Its function is as follows. Required for the formation of a threonylcarbamoyl group on adenosine at position 37 (t(6)A37) in tRNAs that read codons beginning with adenine. Is involved in the transfer of the threonylcarbamoyl moiety of threonylcarbamoyl-AMP (TC-AMP) to the N6 group of A37, together with TsaE and TsaB. TsaD likely plays a direct catalytic role in this reaction. The polypeptide is tRNA N6-adenosine threonylcarbamoyltransferase (Variovorax paradoxus (strain S110)).